The following is a 411-amino-acid chain: Cytosolic Fe-S cluster assembly factor narfl (411 aa).

The [4Fe-4S] cluster site is built by Cys-11, Cys-124, Cys-180, Cys-329, and Cys-333.

This sequence belongs to the NARF family. As to quaternary structure, component of the CIA complex.

In terms of biological role, component of the cytosolic iron-sulfur protein assembly (CIA) complex, a multiprotein complex that mediates the incorporation of iron-sulfur cluster into extramitochondrial Fe/S proteins. In Danio rerio (Zebrafish), this protein is Cytosolic Fe-S cluster assembly factor narfl (narfl).